The primary structure comprises 934 residues: MALKSPAFRRKFPLLVTGGLLALQPFATSYVVAAEQFDCQVSASGGWDCKPKSPVNNLPPRPVHDGAALTSGTEAPSAEAESADKPVLVTESKGRGLKSRSEDYSHLDWVPREKLTAAQLAETGPYCGGAYIEPTRPGMADTTPKDESPTYINAKVSKYQQEQQIATLAGDVVMRQGSMQAEADEANLYQAENRGELKGNVRIRDNGSLVVGDEAQIQLDTGEAQVDNAEYVMHKSHIRGNALYAKRSENAIIRLKDGTYTTCEPGSNAWQLKGNNITLNPATGFGTATNVTLRVKDFPVFYTPYIYFPIDDRRQSGFLPPSFSSTSDTGFMLVTPYYFNLAPNYDATLYPRYMTKRGLLMEGEFRYLTKSSEGQLGGAYLNDKNDDRKEQTDYEDQRWMINWQHKGGLDERLMTEVDYTDISDPFYFQDLESDQIGVESNDVVNQQGALTWRGDTYTARLNAQAYEMATLSQITPYNKLPQITVDGMLPYHPGGFDFSYQTEAVRFDRDLKDDFVTDEDGNPDFTAGAAGRRLDENVSGIARANGNRLNFAPAISLPMQASYGYVTPKLKYVYTNYDLDLDGQGKQEALAQASQPGYGSYSSSISRDVPVFSVDSGLYFDRNTSMFGTNYRQTLEPRMFYLYVPYKDQTDIPLFDTSETLFNFDSLFRDNRFSGTDRIGDENKLSLGVTTRWIQDDGFERQNFSIGQALYFKDRKAQLPGINYRDRSDAQSDVSPYALVYNYYFNRDWRFNSDFNWDPDSRSTRSGSAMFHYQPEDNPNKVVNLGYRYRNDTIAYDSTTGTWKVGGGDYGNPGDPNYIKDYYKIQQHDFSVIWPIVPQWNVIARWQHDYNRNRTLEAMGGFEYDNCCWKLRLINRYWIDYDDFSQAAPQNEKGDHGIFLQIVLKGLGGVVGNKVESFLDQGIEGYREREDQAY.

Residues 1–33 form the signal peptide; the sequence is MALKSPAFRRKFPLLVTGGLLALQPFATSYVVA. Residues 52-86 form a disordered region; that stretch reads KSPVNNLPPRPVHDGAALTSGTEAPSAEAESADKP.

Belongs to the LptD family. Component of the lipopolysaccharide transport and assembly complex. Interacts with LptE and LptA.

Its subcellular location is the cell outer membrane. Functionally, together with LptE, is involved in the assembly of lipopolysaccharide (LPS) at the surface of the outer membrane. The protein is LPS-assembly protein LptD of Pseudomonas putida (strain W619).